We begin with the raw amino-acid sequence, 642 residues long: Aryl hydrocarbon receptor nuclear translocator homolog (642 aa).

Positions 13-66 (ASRENHCEIERRRRNKMTAYITELSDMVPTCSALARKPDKLTILRMAVAHMKAL) constitute a bHLH domain. 2 consecutive PAS domains span residues 85–156 (DQEL…ESQN) and 271–341 (TAAN…LKQK). The PAC domain occupies 346-389 (SLLYRARAKNSEYVWLRTQAYAFLNPYTDEVEYIVCTNSSGKTM). Residues 450-612 (QAPTPQQQQQ…GPAGAGQPQG (163 aa)) are disordered. 2 stretches are compositionally biased toward polar residues: residues 463-482 (RPGS…THSP) and 528-554 (YQYQ…NGNR). Positions 555–564 (QQAQPGAYQA) are enriched in low complexity.

Efficient DNA binding requires dimerization with another bHLH protein. Heterodimer with ahr, trh or sim. In terms of tissue distribution, at stage 11, expression is detected in tracheal pits. At later stages, strong expression is also detected in the CNS.

Its subcellular location is the nucleus. Functionally, heterodimers of tgo/trh are involved in the control of breathless expression. Plays a role in the cellular or tissue response to oxygen deprivation. The protein is Aryl hydrocarbon receptor nuclear translocator homolog (tgo) of Drosophila melanogaster (Fruit fly).